The primary structure comprises 637 residues: Delta(14)-sterol reductase LBR (637 aa).

A Tudor domain is found at 1–62; it reads MPNRKYADGE…DIRLQSSFKQ (62 aa). At 1–205 the chain is on the nuclear side; it reads MPNRKYADGE…KTKELEFGGR (205 aa). Residues 57–73 show a composition bias toward low complexity; that stretch reads QSSFKQRKSQSSSSSPS. The interval 57-151 is disordered; the sequence is QSSFKQRKSQ…SKLLEQQKLK (95 aa). Residues 74–97 are compositionally biased toward basic residues; it reads RRSRSRSRSRSPGRPAKGRRRSSS. Phosphoserine; by PKA is present on residues Ser-95 and Ser-96. Basic and acidic residues-rich tracts occupy residues 98–110 and 124–151; these read HSRE…KKII and NTRR…QKLK. 8 helical membrane-spanning segments follow: residues 206–226, 250–270, 288–309, 317–338, 378–399, 403–425, 466–486, and 554–574; these read FGTF…VLMC, VFGV…LPIG, INGF…YFQF, HFVQ…YLYI, YFCE…MLLA, IHNQ…LYVV, FYLV…ITIL, and PCGF…CLLV.

This sequence belongs to the ERG4/ERG24 family. Interacts with DNA. Interaction with DNA is sequence independent with higher affinity for supercoiled and relaxed circular DNA than linear DNA.

The protein resides in the nucleus inner membrane. Its subcellular location is the nucleus. It is found in the cytoplasm. The protein localises to the endoplasmic reticulum membrane. The enzyme catalyses 5alpha-cholest-8,14-dien-3beta-ol + NADPH + H(+) = 5alpha-cholest-8-en-3beta-ol + NADP(+). It carries out the reaction 4,4-dimethyl-5alpha-cholesta-8,24-dien-3beta-ol + NADP(+) = 4,4-dimethyl-5alpha-cholesta-8,14,24-trien-3beta-ol + NADPH + H(+). It catalyses the reaction 4,4-dimethyl-8,14-cholestadien-3beta-ol + NADPH + H(+) = 4,4-dimethyl-5alpha-cholest-8-en-3beta-ol + NADP(+). Its pathway is steroid biosynthesis; cholesterol biosynthesis. Its function is as follows. Catalyzes the reduction of the C14-unsaturated bond of lanosterol, as part of the metabolic pathway leading to cholesterol biosynthesis. Anchors the lamina and the heterochromatin to the inner nuclear membrane. The polypeptide is Delta(14)-sterol reductase LBR (LBR) (Gallus gallus (Chicken)).